Reading from the N-terminus, the 138-residue chain is Enhancer of split malpha protein (138 aa).

Belongs to the M4-like protein family.

Part of the Notch signaling pathway. This chain is Enhancer of split malpha protein, found in Drosophila melanogaster (Fruit fly).